Here is a 254-residue protein sequence, read N- to C-terminus: Anamorsin homolog (254 aa).

Residues 4–133 (VQENNHVLYL…EVGSKSKLSF (130 aa)) are N-terminal SAM-like domain. Positions 134 to 165 (AKKSNVAAVWKLDDNEEEERIDDEELLDEDDK) are linker. 4 residues coordinate [2Fe-2S] cluster: cysteine 176, cysteine 185, cysteine 188, and cysteine 190. The fe-S binding site A stretch occupies residues 176 to 190 (CGTTGKRKACKDCSC). Residues cysteine 215, cysteine 218, cysteine 226, and cysteine 229 each contribute to the [4Fe-4S] cluster site. Short sequence motifs (cx2C motif) lie at residues 215–218 (CGSC) and 226–229 (CATC). The fe-S binding site B stretch occupies residues 215–229 (CGSCYLGDAFRCATC).

It belongs to the anamorsin family. As to quaternary structure, monomer. [2Fe-2S] cluster is required as a cofactor. It depends on [4Fe-4S] cluster as a cofactor.

The protein resides in the cytoplasm. It is found in the mitochondrion intermembrane space. Its function is as follows. Component of the cytosolic iron-sulfur (Fe-S) protein assembly (CIA) machinery. Required for the maturation of extramitochondrial Fe-S proteins. Part of an electron transfer chain functioning in an early step of cytosolic Fe-S biogenesis, facilitating the de novo assembly of a [4Fe-4S] cluster on the cytosolic Fe-S scaffold complex. Electrons are transferred from NADPH via a FAD- and FMN-containing diflavin oxidoreductase. Together with the diflavin oxidoreductase, also required for the assembly of the diferric tyrosyl radical cofactor of ribonucleotide reductase (RNR), probably by providing electrons for reduction during radical cofactor maturation in the catalytic small subunit. This Anopheles gambiae (African malaria mosquito) protein is Anamorsin homolog.